A 285-amino-acid chain; its full sequence is Diphthine methyl ester synthase (285 aa).

S-adenosyl-L-methionine-binding positions include L9, D84, G87, 112–113 (SI), L163, V221, and H246.

Belongs to the diphthine synthase family.

It localises to the cytoplasm. The enzyme catalyses 2-[(3S)-amino-3-carboxypropyl]-L-histidyl-[translation elongation factor 2] + 4 S-adenosyl-L-methionine = diphthine methyl ester-[translation elongation factor 2] + 4 S-adenosyl-L-homocysteine + 3 H(+). It functions in the pathway protein modification; peptidyl-diphthamide biosynthesis. Its function is as follows. S-adenosyl-L-methionine-dependent methyltransferase that catalyzes four methylations of the modified target histidine residue in translation elongation factor 2 (EF-2), to form an intermediate called diphthine methyl ester. The four successive methylation reactions represent the second step of diphthamide biosynthesis. The polypeptide is Diphthine methyl ester synthase (dph5) (Aspergillus fumigatus (strain ATCC MYA-4609 / CBS 101355 / FGSC A1100 / Af293) (Neosartorya fumigata)).